Reading from the N-terminus, the 87-residue chain is HssA/B-like protein 18 (87 aa).

This sequence belongs to the hssA/B family.

This Dictyostelium discoideum (Social amoeba) protein is HssA/B-like protein 18 (hssl18).